Here is a 253-residue protein sequence, read N- to C-terminus: 3-deoxy-manno-octulosonate cytidylyltransferase (253 aa).

The protein belongs to the KdsB family.

It is found in the cytoplasm. It carries out the reaction 3-deoxy-alpha-D-manno-oct-2-ulosonate + CTP = CMP-3-deoxy-beta-D-manno-octulosonate + diphosphate. It functions in the pathway nucleotide-sugar biosynthesis; CMP-3-deoxy-D-manno-octulosonate biosynthesis; CMP-3-deoxy-D-manno-octulosonate from 3-deoxy-D-manno-octulosonate and CTP: step 1/1. The protein operates within bacterial outer membrane biogenesis; lipopolysaccharide biosynthesis. Functionally, activates KDO (a required 8-carbon sugar) for incorporation into bacterial lipopolysaccharide in Gram-negative bacteria. This Pseudoalteromonas translucida (strain TAC 125) protein is 3-deoxy-manno-octulosonate cytidylyltransferase.